The following is a 517-amino-acid chain: Ubiquitin carboxyl-terminal hydrolase 30 (517 aa).

The Mitochondrial intermembrane segment spans residues 1–35 (MLSSRAQAARTAADKALQRFLRTGAAVRYKVMKNW). The helical transmembrane segment at 36-56 (GVIGGIAAALAAGIYVIWGPI) threads the bilayer. The Cytoplasmic portion of the chain corresponds to 57–517 (TERKKRRKGL…QQGREYRSEE (461 aa)). The USP domain occupies 68–502 (PGLVNLGNTC…SAYLLFYERV (435 aa)). Cys77 (nucleophile) is an active-site residue. Residues 198 to 221 (MAPRQVTCHTRGSPHPTTNHWKSQ) form a disordered region. Over residues 204–218 (TCHTRGSPHPTTNHW) the composition is skewed to polar residues. Glycyl lysine isopeptide (Lys-Gly) (interchain with G-Cter in ubiquitin) cross-links involve residues Lys235 and Lys289. The interval 364-395 (SQHGPKATENPGSAPEVQDAQAAPKPGLSQPG) is disordered. His452 serves as the catalytic Proton acceptor.

The protein belongs to the peptidase C19 family. Ubiquitinated by parkin (PRKN) at Lys-235 and Lys-289, leading to its degradation.

It localises to the mitochondrion outer membrane. The enzyme catalyses Thiol-dependent hydrolysis of ester, thioester, amide, peptide and isopeptide bonds formed by the C-terminal Gly of ubiquitin (a 76-residue protein attached to proteins as an intracellular targeting signal).. With respect to regulation, inhibited by the diterpenoid derivative 15-oxospiramilactone (S3). Deubiquitinating enzyme tethered to the mitochondrial outer membrane that acts as a key inhibitor of mitophagy by counteracting the action of parkin (PRKN): hydrolyzes ubiquitin attached by parkin on target proteins, such as RHOT1/MIRO1 and TOMM20, thereby blocking parkin's ability to drive mitophagy. Preferentially cleaves 'Lys-6'- and 'Lys-11'-linked polyubiquitin chains, 2 types of linkage that participate in mitophagic signaling. Does not cleave efficiently polyubiquitin phosphorylated at 'Ser-65'. Acts as negative regulator of mitochondrial fusion by mediating deubiquitination of MFN1 and MFN2. This Mus musculus (Mouse) protein is Ubiquitin carboxyl-terminal hydrolase 30 (Usp30).